The chain runs to 196 residues: dCTP deaminase, dUMP-forming (196 aa).

DCTP contacts are provided by residues 101 to 106, D119, 127 to 129, Q148, Y162, and Q174; these read KSSLGR and TLE. The Proton donor/acceptor role is filled by E129.

This sequence belongs to the dCTP deaminase family. As to quaternary structure, homotrimer.

The enzyme catalyses dCTP + 2 H2O = dUMP + NH4(+) + diphosphate. Its pathway is pyrimidine metabolism; dUMP biosynthesis; dUMP from dCTP: step 1/1. Functionally, bifunctional enzyme that catalyzes both the deamination of dCTP to dUTP and the hydrolysis of dUTP to dUMP without releasing the toxic dUTP intermediate. The protein is dCTP deaminase, dUMP-forming of Tropheryma whipplei (strain TW08/27) (Whipple's bacillus).